The chain runs to 243 residues: MLTFLIPTAKEMMIPKESHPHLLPQDSQAILKIMAAMTTEDLAKSYRIKEEAAKKEQQRWQDMASQQNLAYPAYQLFNGLMYRHIKRDKLTTQEQAYLTQQVYITSSFYGIIPANHPIAEHRHDFHTRIKIEGQSLKSYWRPCYNQFAKEHPQVISLLSSEFDDVFSKDCKQLWISPKFMAEKEGQFKTHSTISKKARGAFLTACMENNCQTVDSLKSLVFAGFYYHPDLSTDHEFVYIKKEA.

It belongs to the UPF0246 family.

The polypeptide is UPF0246 protein M28_Spy1772 (Streptococcus pyogenes serotype M28 (strain MGAS6180)).